The following is a 332-amino-acid chain: Biotin synthase (332 aa).

The region spanning 53–282 is the Radical SAM core domain; sequence HFGKKVKLNM…TKEIRISGGR (230 aa). Residues C71, C75, and C78 each contribute to the [4Fe-4S] cluster site. Residues C115, C147, C207, and R277 each contribute to the [2Fe-2S] cluster site.

It belongs to the radical SAM superfamily. Biotin synthase family. In terms of assembly, homodimer. Requires [4Fe-4S] cluster as cofactor. The cofactor is [2Fe-2S] cluster.

The enzyme catalyses (4R,5S)-dethiobiotin + (sulfur carrier)-SH + 2 reduced [2Fe-2S]-[ferredoxin] + 2 S-adenosyl-L-methionine = (sulfur carrier)-H + biotin + 2 5'-deoxyadenosine + 2 L-methionine + 2 oxidized [2Fe-2S]-[ferredoxin]. It functions in the pathway cofactor biosynthesis; biotin biosynthesis; biotin from 7,8-diaminononanoate: step 2/2. In terms of biological role, catalyzes the conversion of dethiobiotin (DTB) to biotin by the insertion of a sulfur atom into dethiobiotin via a radical-based mechanism. This Bacillus mycoides (strain KBAB4) (Bacillus weihenstephanensis) protein is Biotin synthase.